Consider the following 97-residue polypeptide: UPF0235 protein HD_0778 (97 aa).

The protein belongs to the UPF0235 family.

The chain is UPF0235 protein HD_0778 from Haemophilus ducreyi (strain 35000HP / ATCC 700724).